The following is a 735-amino-acid chain: Rho GTPase-activating protein SYDE1 (735 aa).

Disordered stretches follow at residues 1 to 253 (MAEP…PYEV), 601 to 655 (PDTR…AGDW), and 669 to 706 (FLSG…FDAP). A compositionally biased stretch (basic and acidic residues) spans 14-47 (RGREKLPRKKSDAKDRGRPAQRSEPKPPEPEPRV). Positions 151–160 (PTKTSRTKSP) are enriched in low complexity. Ser-224, Ser-231, Ser-235, and Ser-244 each carry phosphoserine. The C2 domain occupies 249-366 (RPYEVGPSAR…FRGCQAQQLA (118 aa)). Residues 398 to 604 (LPLQLLVERE…YLLQSWPDTR (207 aa)) enclose the Rho-GAP domain. Basic and acidic residues predominate over residues 669–679 (FLSGPDYDHVT). Phosphoserine occurs at positions 681 and 683.

In terms of processing, palmitoylated. Probably palmitoylated by ZDHHC3 and ZDHHC7.

Its function is as follows. GTPase activator for the Rho-type GTPases. As a GCM1 downstream effector, it is involved in placental development and positively regulates trophoblast cells migration. It regulates cytoskeletal remodeling by controlling the activity of Rho GTPases including RHOA, CDC42 and RAC1. The polypeptide is Rho GTPase-activating protein SYDE1 (Syde1) (Rattus norvegicus (Rat)).